We begin with the raw amino-acid sequence, 594 residues long: DNA ligase (594 aa).

NAD(+) is bound by residues 32–36, 81–82, and Glu118; these read DEEYD and SL. Lys120 (N6-AMP-lysine intermediate) is an active-site residue. The NAD(+) site is built by Arg141, Glu181, Lys299, and Lys323. Zn(2+) contacts are provided by Cys417, Cys420, Cys436, and Cys442.

This sequence belongs to the NAD-dependent DNA ligase family. LigA subfamily. The cofactor is Mg(2+). It depends on Mn(2+) as a cofactor.

It catalyses the reaction NAD(+) + (deoxyribonucleotide)n-3'-hydroxyl + 5'-phospho-(deoxyribonucleotide)m = (deoxyribonucleotide)n+m + AMP + beta-nicotinamide D-nucleotide.. Functionally, DNA ligase that catalyzes the formation of phosphodiester linkages between 5'-phosphoryl and 3'-hydroxyl groups in double-stranded DNA using NAD as a coenzyme and as the energy source for the reaction. It is essential for DNA replication and repair of damaged DNA. This Blochmanniella floridana protein is DNA ligase.